A 283-amino-acid chain; its full sequence is Phosphatidylglycerol--prolipoprotein diacylglyceryl transferase (283 aa).

Helical transmembrane passes span isoleucine 19–valine 39, leucine 59–glutamine 79, isoleucine 90–alanine 110, and valine 120–glycine 140. Arginine 141 lines the a 1,2-diacyl-sn-glycero-3-phospho-(1'-sn-glycerol) pocket. 3 helical membrane-spanning segments follow: residues threonine 181–phenylalanine 201, valine 212–glycine 232, and isoleucine 245–tyrosine 265.

The protein belongs to the Lgt family.

It is found in the cell inner membrane. The catalysed reaction is L-cysteinyl-[prolipoprotein] + a 1,2-diacyl-sn-glycero-3-phospho-(1'-sn-glycerol) = an S-1,2-diacyl-sn-glyceryl-L-cysteinyl-[prolipoprotein] + sn-glycerol 1-phosphate + H(+). The protein operates within protein modification; lipoprotein biosynthesis (diacylglyceryl transfer). Functionally, catalyzes the transfer of the diacylglyceryl group from phosphatidylglycerol to the sulfhydryl group of the N-terminal cysteine of a prolipoprotein, the first step in the formation of mature lipoproteins. This is Phosphatidylglycerol--prolipoprotein diacylglyceryl transferase from Nostoc sp. (strain PCC 7120 / SAG 25.82 / UTEX 2576).